Here is a 100-residue protein sequence, read N- to C-terminus: Large ribosomal subunit protein bL27 (100 aa).

A propeptide spanning residues 1-9 (MIIMNLQIF) is cleaved from the precursor. The interval 13–32 (KGMGSSKNGRDSESKRLGTK) is disordered.

Belongs to the bacterial ribosomal protein bL27 family. Post-translationally, the N-terminus is cleaved by ribosomal processing cysteine protease Prp.

The chain is Large ribosomal subunit protein bL27 from Clostridium kluyveri (strain ATCC 8527 / DSM 555 / NBRC 12016 / NCIMB 10680 / K1).